The following is a 446-amino-acid chain: N-succinylarginine dihydrolase (446 aa).

Residues 19 to 28, N110, and 137 to 138 each bind substrate; these read AGLSFGNVAS and HR. The active site involves E174. Substrate is bound at residue R213. The active site involves H249. D251 and N364 together coordinate substrate. Residue C370 is the Nucleophile of the active site.

The protein belongs to the succinylarginine dihydrolase family. As to quaternary structure, homodimer.

The enzyme catalyses N(2)-succinyl-L-arginine + 2 H2O + 2 H(+) = N(2)-succinyl-L-ornithine + 2 NH4(+) + CO2. It participates in amino-acid degradation; L-arginine degradation via AST pathway; L-glutamate and succinate from L-arginine: step 2/5. Functionally, catalyzes the hydrolysis of N(2)-succinylarginine into N(2)-succinylornithine, ammonia and CO(2). This is N-succinylarginine dihydrolase from Burkholderia ambifaria (strain ATCC BAA-244 / DSM 16087 / CCUG 44356 / LMG 19182 / AMMD) (Burkholderia cepacia (strain AMMD)).